Reading from the N-terminus, the 29-residue chain is uncharacterized protein (29 aa).

It is found in the plastid. Its subcellular location is the chloroplast. This is an uncharacterized protein from Trieres chinensis (Marine centric diatom).